The following is a 177-amino-acid chain: SPbeta prophage-derived uncharacterized protein YopI (177 aa).

A helical transmembrane segment spans residues 11–31; sequence FEGIIGALLGVIVTLILTHIL.

It localises to the cell membrane. This chain is SPbeta prophage-derived uncharacterized protein YopI (yopI), found in Bacillus subtilis (strain 168).